The sequence spans 119 residues: Beta-2-microglobulin (119 aa).

The N-terminal stretch at 1–20 is a signal peptide; it reads MARSVAVVFLMLLSVVCLDA. The region spanning 25-114 is the Ig-like C1-type domain; that stretch reads PQVQVYTRHP…TTLKEPKVVT (90 aa). The cysteines at positions 45 and 100 are disulfide-linked.

It belongs to the beta-2-microglobulin family. In terms of assembly, heterodimer of an alpha chain and a beta chain. Beta-2-microglobulin is the beta-chain of major histocompatibility complex class I molecules.

The protein localises to the secreted. Functionally, component of the class I major histocompatibility complex (MHC). Involved in the presentation of peptide antigens to the immune system. The sequence is that of Beta-2-microglobulin (B2M) from Cricetulus griseus (Chinese hamster).